The following is a 1581-amino-acid chain: Pentafunctional AROM polypeptide (1581 aa).

The 3-dehydroquinate synthase stretch occupies residues 1–384 (MPEPTKISIL…YEPKASVVPN (384 aa)). NAD(+)-binding positions include 44–46 (DTN), 81–84 (EVSK), 114–116 (GGV), and aspartate 119. Arginine 130 is a 7-phospho-2-dehydro-3-deoxy-D-arabino-heptonate binding site. An NAD(+)-binding site is contributed by 139 to 140 (TT). Residues aspartate 146 and lysine 152 each coordinate 7-phospho-2-dehydro-3-deoxy-D-arabino-heptonate. NAD(+) is bound at residue lysine 161. Residue asparagine 162 coordinates 7-phospho-2-dehydro-3-deoxy-D-arabino-heptonate. Residues 179 to 182 (FLET) and asparagine 190 each bind NAD(+). Glutamate 194 contacts Zn(2+). Residues 194–197 (EVIK) and lysine 250 each bind 7-phospho-2-dehydro-3-deoxy-D-arabino-heptonate. Glutamate 260 functions as the Proton acceptor; for 3-dehydroquinate synthase activity in the catalytic mechanism. Residues 264–268 (RNLLN) and histidine 271 contribute to the 7-phospho-2-dehydro-3-deoxy-D-arabino-heptonate site. Histidine 271 contacts Zn(2+). Histidine 275 functions as the Proton acceptor; for 3-dehydroquinate synthase activity in the catalytic mechanism. 7-phospho-2-dehydro-3-deoxy-D-arabino-heptonate-binding residues include histidine 287 and lysine 356. Histidine 287 is a Zn(2+) binding site. The interval 397–842 (VHPGVPKESN…WDTLRQLFSV (446 aa)) is EPSP synthase. Cysteine 824 functions as the For EPSP synthase activity in the catalytic mechanism. The interval 864 to 1056 (SASVFIIGMR…KQKKHSFFVS (193 aa)) is shikimate kinase. 871–878 (GMRGAGKT) serves as a coordination point for ATP. Residues 1057-1277 (LTLPDLRSAS…AAPGQLSATE (221 aa)) form a 3-dehydroquinase region. The active-site Proton acceptor; for 3-dehydroquinate dehydratase activity is the histidine 1180. Lysine 1208 (schiff-base intermediate with substrate; for 3-dehydroquinate dehydratase activity) is an active-site residue. Residues 1290–1581 (KKRFAIFGNP…ARTAVLGDSA (292 aa)) are shikimate dehydrogenase.

In the N-terminal section; belongs to the sugar phosphate cyclases superfamily. Dehydroquinate synthase family. This sequence in the 2nd section; belongs to the EPSP synthase family. It in the 3rd section; belongs to the shikimate kinase family. The protein in the 4th section; belongs to the type-I 3-dehydroquinase family. In the C-terminal section; belongs to the shikimate dehydrogenase family. As to quaternary structure, homodimer. Requires Zn(2+) as cofactor.

It localises to the cytoplasm. The catalysed reaction is 7-phospho-2-dehydro-3-deoxy-D-arabino-heptonate = 3-dehydroquinate + phosphate. The enzyme catalyses 3-dehydroquinate = 3-dehydroshikimate + H2O. It catalyses the reaction shikimate + NADP(+) = 3-dehydroshikimate + NADPH + H(+). It carries out the reaction shikimate + ATP = 3-phosphoshikimate + ADP + H(+). The catalysed reaction is 3-phosphoshikimate + phosphoenolpyruvate = 5-O-(1-carboxyvinyl)-3-phosphoshikimate + phosphate. Its pathway is metabolic intermediate biosynthesis; chorismate biosynthesis; chorismate from D-erythrose 4-phosphate and phosphoenolpyruvate: step 2/7. The protein operates within metabolic intermediate biosynthesis; chorismate biosynthesis; chorismate from D-erythrose 4-phosphate and phosphoenolpyruvate: step 3/7. It participates in metabolic intermediate biosynthesis; chorismate biosynthesis; chorismate from D-erythrose 4-phosphate and phosphoenolpyruvate: step 4/7. It functions in the pathway metabolic intermediate biosynthesis; chorismate biosynthesis; chorismate from D-erythrose 4-phosphate and phosphoenolpyruvate: step 5/7. Its pathway is metabolic intermediate biosynthesis; chorismate biosynthesis; chorismate from D-erythrose 4-phosphate and phosphoenolpyruvate: step 6/7. In terms of biological role, the AROM polypeptide catalyzes 5 consecutive enzymatic reactions in prechorismate polyaromatic amino acid biosynthesis. The protein is Pentafunctional AROM polypeptide of Aspergillus terreus (strain NIH 2624 / FGSC A1156).